The primary structure comprises 154 residues: MAARLYCQLDPSRDVLCLRPVGAESRGRPLSGPLGTLSSPSPSAVPADHGAHLSLRGLPVCAFSSAGPCALRFTSARCMETTVNAHQILPKVLHKRTLGLPAMSTTDLEAYFKDSVFKDWEELGEEIRLKVFVLGGCRHKLVCAPAPCNFFTSA.

Residues 68-117 (PCALRFTSARCMETTVNAHQILPKVLHKRTLGLPAMSTTDLEAYFKDSVF) form a mitochondrial targeting sequence region.

Belongs to the orthohepadnavirus protein X family. In terms of assembly, may form homodimer. May interact with host CEBPA, CFLAR, CREB1, DDB1, E4F1, HBXIP, HSPD1/HSP60, NFKBIA, POLR2E and SMAD4. Interacts with host SMC5-SMC6 complex and induces its degradation. Interacts with host TRPC4AP; leading to prevent ubiquitination of TRPC4AP. Interacts with host PLSCR1; this interaction promotes ubiquitination and degradation of HBx and impairs HBx-mediated cell proliferation. A fraction may be phosphorylated in insect cells and HepG2 cells, a human hepatoblastoma cell line. Phosphorylated in vitro by host protein kinase C or mitogen-activated protein kinase. N-acetylated in insect cells.

The protein resides in the host cytoplasm. It localises to the host nucleus. It is found in the host mitochondrion. Functionally, multifunctional protein that plays a role in silencing host antiviral defenses and promoting viral transcription. Does not seem to be essential for HBV infection. May be directly involved in development of cirrhosis and liver cancer (hepatocellular carcinoma). Most of cytosolic activities involve modulation of cytosolic calcium. The effect on apoptosis is controversial depending on the cell types in which the studies have been conducted. May induce apoptosis by localizing in mitochondria and causing loss of mitochondrial membrane potential. May also modulate apoptosis by binding host CFLAR, a key regulator of the death-inducing signaling complex (DISC). Promotes viral transcription by using the host E3 ubiquitin ligase DDB1 to target the SMC5-SMC6 complex to proteasomal degradation. This host complex would otherwise bind to viral episomal DNA, and prevents its transcription. Moderately stimulates transcription of many different viral and cellular transcription elements. Promoters and enhancers stimulated by HBx contain DNA binding sites for NF-kappa-B, AP-1, AP-2, c-EBP, ATF/CREB, or the calcium-activated factor NF-AT. The sequence is that of Protein X from Homo sapiens (Human).